Here is a 38-residue protein sequence, read N- to C-terminus: Large ribosomal subunit protein bL36 (38 aa).

This sequence belongs to the bacterial ribosomal protein bL36 family.

This is Large ribosomal subunit protein bL36 from Bacteroides fragilis (strain ATCC 25285 / DSM 2151 / CCUG 4856 / JCM 11019 / LMG 10263 / NCTC 9343 / Onslow / VPI 2553 / EN-2).